The primary structure comprises 200 residues: V-type proton ATPase subunit E (200 aa).

Belongs to the V-ATPase E subunit family.

Its function is as follows. Produces ATP from ADP in the presence of a proton gradient across the membrane. In Thermoanaerobacter pseudethanolicus (strain ATCC 33223 / 39E) (Clostridium thermohydrosulfuricum), this protein is V-type proton ATPase subunit E.